We begin with the raw amino-acid sequence, 192 residues long: uncharacterized protein (192 aa).

This is an uncharacterized protein from Methanocaldococcus jannaschii (strain ATCC 43067 / DSM 2661 / JAL-1 / JCM 10045 / NBRC 100440) (Methanococcus jannaschii).